Here is a 142-residue protein sequence, read N- to C-terminus: Hemoglobin subunit alpha-2 (142 aa).

In terms of domain architecture, Globin spans 2–142 (LLTADDKKHI…VSSVLTSKYR (141 aa)). An O2-binding site is contributed by histidine 59. A heme b-binding site is contributed by histidine 88.

Belongs to the globin family. Heterotetramer of two alpha chains and two beta chains. Red blood cells.

Functionally, involved in oxygen transport from the lung to the various peripheral tissues. The protein is Hemoglobin subunit alpha-2 (hba2) of Xenopus borealis (Kenyan clawed frog).